A 500-amino-acid polypeptide reads, in one-letter code: MMCKAQEWLRVTALLFVARAVPAMVVPNATLLEKLLEKYMDEDGEWWTAKQRGKRAITDNDMQSILDLHNKLRSQVYPTASNMEYMTWDVELERSAESWAEMCLWEHGPASLLPSIGQNLGAHWGRYRPPTFHVQAWYDEVRDFSYPYENECDPYCPFRCSGPVCTHYTQVVWATSSRIGCAVNLCHNMNIWGQIWPKAVYLVCNYSPKGNWWGHAPYKHGRPCSACPPSFGGGCRENLCYKEGSDRYYTPREEETNEIERQQSQVHDTHVRTRSDDSDRNDVISTQQMSQIVSCEVRLRDQCKGTTCNRYECPAGCLDSKAKVIGSVHYEMQSSICRAAIHYGIIDNEGGWVDVTRQGRKHYFIKSNRNGIQTIGKYHSANSFTVSKVTVQAVTCETTVEQLCPFHKPASHCPRVYCPRNCMQSNPHYARVIGTRIYSDLSSICRAAVHAGVVRNHGGYVDVMPVDKRKMYTASFQNGIFSESLQNPTGGKAFRVFAVV.

The first 23 residues, 1–23 (MMCKAQEWLRVTALLFVARAVPA), serve as a signal peptide directing secretion. The region spanning 66–206 (LDLHNKLRSQ…PKAVYLVCNY (141 aa)) is the SCP domain. The segment at 258–281 (EIERQQSQVHDTHVRTRSDDSDRN) is disordered. 2 consecutive LCCL domains span residues 289–384 (MSQI…ANSF) and 390–492 (TVQA…TGGK). 4 cysteine pairs are disulfide-bonded: Cys-295/Cys-313, Cys-317/Cys-337, Cys-396/Cys-418, and Cys-422/Cys-445.

It belongs to the CRISP family.

It is found in the secreted. The protein is Cysteine-rich secretory protein LCCL domain-containing 1 (Crispld1) of Mus musculus (Mouse).